The following is a 196-amino-acid chain: Peptide deformylase (196 aa).

C123 and H166 together coordinate Fe cation. Residue E167 is part of the active site. Position 170 (H170) interacts with Fe cation.

The protein belongs to the polypeptide deformylase family. Requires Fe(2+) as cofactor.

It carries out the reaction N-terminal N-formyl-L-methionyl-[peptide] + H2O = N-terminal L-methionyl-[peptide] + formate. Removes the formyl group from the N-terminal Met of newly synthesized proteins. Requires at least a dipeptide for an efficient rate of reaction. N-terminal L-methionine is a prerequisite for activity but the enzyme has broad specificity at other positions. In Lactococcus lactis subsp. lactis (strain IL1403) (Streptococcus lactis), this protein is Peptide deformylase.